We begin with the raw amino-acid sequence, 194 residues long: Porimin (194 aa).

A signal peptide spans M1 to A24. The Extracellular portion of the chain corresponds to Q25–D151. Residues N36, N47, N51, N59, N76, and N114 are each glycosylated (N-linked (GlcNAc...) asparagine). A disordered region spans residues K88–T124. Low complexity predominate over residues T99–T124. Residues A152 to G172 traverse the membrane as a helical segment. Residues C173–I194 are Cytoplasmic-facing. Phosphoserine is present on S186.

It belongs to the CD164 family.

Its subcellular location is the membrane. Its function is as follows. Implicated in oncotic cell death, characterized by cell swelling, organelle swelling, vacuolization and increased membrane permeability. The sequence is that of Porimin (Tmem123) from Rattus norvegicus (Rat).